The following is a 37-amino-acid chain: Large ribosomal subunit protein bL36 (37 aa).

It belongs to the bacterial ribosomal protein bL36 family.

This chain is Large ribosomal subunit protein bL36, found in Thermus thermophilus (strain ATCC BAA-163 / DSM 7039 / HB27).